We begin with the raw amino-acid sequence, 203 residues long: Holliday junction branch migration complex subunit RuvA (203 aa).

Positions 1-64 are domain I; it reads MIGRLRGIII…EDAQLLYGFN (64 aa). Residues 65-142 are domain II; the sequence is NKQERTLFKE…KGLHGDLFTP (78 aa). A flexible linker region spans residues 143–154; sequence AADLVLTSPASP. Positions 155-203 are domain III; sequence ATDDAEQEAVAALVALGYKPQEASRMVSKIARPDTSSETLIREALRAAL.

Belongs to the RuvA family. As to quaternary structure, homotetramer. Forms an RuvA(8)-RuvB(12)-Holliday junction (HJ) complex. HJ DNA is sandwiched between 2 RuvA tetramers; dsDNA enters through RuvA and exits via RuvB. An RuvB hexamer assembles on each DNA strand where it exits the tetramer. Each RuvB hexamer is contacted by two RuvA subunits (via domain III) on 2 adjacent RuvB subunits; this complex drives branch migration. In the full resolvosome a probable DNA-RuvA(4)-RuvB(12)-RuvC(2) complex forms which resolves the HJ.

The protein resides in the cytoplasm. The RuvA-RuvB-RuvC complex processes Holliday junction (HJ) DNA during genetic recombination and DNA repair, while the RuvA-RuvB complex plays an important role in the rescue of blocked DNA replication forks via replication fork reversal (RFR). RuvA specifically binds to HJ cruciform DNA, conferring on it an open structure. The RuvB hexamer acts as an ATP-dependent pump, pulling dsDNA into and through the RuvAB complex. HJ branch migration allows RuvC to scan DNA until it finds its consensus sequence, where it cleaves and resolves the cruciform DNA. The polypeptide is Holliday junction branch migration complex subunit RuvA (Shigella flexneri serotype 5b (strain 8401)).